The following is a 1108-amino-acid chain: Retinal guanylyl cyclase 2 (1108 aa).

The signal sequence occupies residues 1 to 50; the sequence is MFLGPWPFSRLLSWFAISSRLSGQHGLTSSKFLRYLCLLALLPLIWWGQA. Residues 51 to 465 lie on the Extracellular side of the membrane; sequence LPYKIGVIGP…QGKICQGGID (415 aa). A disulfide bond links Cys-104 and Cys-132. The chain crosses the membrane as a helical span at residues 466-490; it reads PALAMMVCFALLLALLSINGFAYFI. Residues 491–1108 lie on the Cytoplasmic side of the membrane; sequence RRRINKIQLI…AERQLVRNKP (618 aa). Positions 532-812 constitute a Protein kinase domain; it reads FQIISEVQSG…DEIFNQFKTF (281 aa). Positions 884 to 1014 constitute a Guanylate cyclase domain; the sequence is TLYFSDIVGF…DTVNTASRME (131 aa).

The protein belongs to the adenylyl cyclase class-4/guanylyl cyclase family. Homodimer. Interacts with RD3; promotes the exit of GUCY2F from the endoplasmic reticulum and its trafficking to the photoreceptor outer segments. Post-translationally, there are 9 conserved cysteine residues in sensory guanylate cyclases, 6 in the extracellular domain, which may be involved in intra- or interchain disulfide bonds. In terms of tissue distribution, expressed only in the eye.

It is found in the membrane. Its subcellular location is the photoreceptor outer segment membrane. The catalysed reaction is GTP = 3',5'-cyclic GMP + diphosphate. Its activity is regulated as follows. Activated by GUCA1B when free calcium ions concentration is low, and inhibited by GUCA1B when free calcium ions concentration is high. Inhibited by RD3. Its function is as follows. Responsible for the synthesis of cyclic GMP (cGMP) in rods and cones of photoreceptors. Plays an essential role in phototransduction, by mediating cGMP replenishment. May also participate in the trafficking of membrane-asociated proteins to the photoreceptor outer segment membrane. This is Retinal guanylyl cyclase 2 (Gucy2f) from Rattus norvegicus (Rat).